The following is a 242-amino-acid chain: DNA repair protein RecO (242 aa).

It belongs to the RecO family.

In terms of biological role, involved in DNA repair and RecF pathway recombination. The chain is DNA repair protein RecO from Vibrio atlanticus (strain LGP32) (Vibrio splendidus (strain Mel32)).